Consider the following 963-residue polypeptide: Protocadherin alpha-C1 (963 aa).

Positions 1-18 (MVGWGVAVLCLWVSCGAA) are cleaved as a signal peptide. 5 Cadherin domains span residues 19–124 (AGQL…SPLF), 125–233 (PAGD…APVF), 234–340 (ERSV…APEL), 349–445 (VPED…TPSF), and 446–555 (PQPQ…YPVI). The Extracellular segment spans residues 19-683 (AGQLEYSVPE…GGQLSAQNLY (665 aa)). Asn38 carries N-linked (GlcNAc...) asparagine glycosylation. 2 N-linked (GlcNAc...) asparagine glycosylation sites follow: Asn248 and Asn274. An N-linked (GlcNAc...) asparagine glycan is attached at Asn562. One can recognise a Cadherin 6 domain in the interval 570 to 667 (VPRSARTGHL…NSVPQLLPDF (98 aa)). A helical transmembrane segment spans residues 684–704 (LVIALACISFLFLGCLLFFVC). The Cytoplasmic segment spans residues 705-963 (TKLHQSPGCC…GNSTTDNSDQ (259 aa)). PXXP repeat units follow at residues 812-815 (PRQP), 845-848 (PGGP), 886-889 (PGNP), and 904-907 (PGSP). The interval 812 to 907 (PRQPNPDWRY…PDKFIIPGSP (96 aa)) is 4 X 4 AA repeats of P-X-X-P. Positions 844–902 (GPGGPDQQWPTVSSATPEPEAGEVSPPVGAGVNSNSWTFKYGPGNPKQSGPGELPDKFI) are disordered. The disordered stretch occupies residues 914 to 963 (QEPANSQIDKSDFITFGKKEETKKKKKKKKGNKTQEKKEKGNSTTDNSDQ). Basic and acidic residues predominate over residues 922–936 (DKSDFITFGKKEETK).

It is found in the cell membrane. In terms of biological role, potential calcium-dependent cell-adhesion protein. May be involved in the establishment and maintenance of specific neuronal connections in the brain. The protein is Protocadherin alpha-C1 (PCDHAC1) of Pan troglodytes (Chimpanzee).